Here is a 254-residue protein sequence, read N- to C-terminus: Alcohol dehydrogenase 2 (254 aa).

10–33 (FVAGLGGIGFDTSREIVKRGPKNL) contributes to the NAD(+) binding site. Substrate is bound at residue S138. Y151 acts as the Proton acceptor in catalysis.

It belongs to the short-chain dehydrogenases/reductases (SDR) family. As to quaternary structure, homodimer.

The enzyme catalyses a primary alcohol + NAD(+) = an aldehyde + NADH + H(+). It carries out the reaction a secondary alcohol + NAD(+) = a ketone + NADH + H(+). The protein is Alcohol dehydrogenase 2 (Adh2) of Drosophila mojavensis (Fruit fly).